Consider the following 498-residue polypeptide: MATNYNEKLLLNYVPVYVMLPLGVVNVENVFADPETLETQLKRLKEEAGVDGVMVDVWWGIIESKGPKQYDWTAYKTLFQLIARLGLKIQAIMSFHQCGGNVGDIVTIPIPQWVRDVGDNDPDIYYTNRKGTRDIEYLSIGVDNLPLFAGRTAVQLYSDYMSSFKENMADLIEAGVIVDIEVGLGPAGELRYPSYPQSQGWVFPGIGEFQCYDKYLKKDFKEAAAKAGHPEWDLPEDAGEYNDKPEETGFFKKDGTYVSEKGKFFMTWYSNKLIFHGDQILGEANKIFAGLKVNLAAKVSGIHWLYNHHSHAAELTAGYYNLFKRDGYRPIARMLSKHYGILNFTCLEMKDTDNTAEALSAPQELVQEVLSKAWKEGIEVAGENALETYGAKGYNQILLNARPNGVNPNGKPKLRMYGFTYLRLSDTVFQENNFELFKKLVRKMHADQDYCGDAAKYGHEIVPLKTSNSQLTLEDIADAAQPSGAFKWDSETDLKVDG.

Positions 56, 96, and 104 each coordinate substrate. The Proton donor role is filled by Glu-189. The substrate site is built by Lys-298, His-303, and Thr-345. Residue Glu-383 is the Proton acceptor of the active site. Residues 384–385 (NA) and Arg-423 contribute to the substrate site.

The protein belongs to the glycosyl hydrolase 14 family. Detected in phloem sieve elements.

The protein localises to the cytoplasm. It carries out the reaction Hydrolysis of (1-&gt;4)-alpha-D-glucosidic linkages in polysaccharides so as to remove successive maltose units from the non-reducing ends of the chains.. Functionally, beta-amylase activity. Major cytosolic beta-amylase isoform in rosette leaves and inflorescences stems. The sequence is that of Beta-amylase 5 (BAM5) from Arabidopsis thaliana (Mouse-ear cress).